The following is a 200-amino-acid chain: Pyridoxal 5'-phosphate synthase subunit PdxT (200 aa).

L-glutamine is bound at residue Gly46–Ser48. The active-site Nucleophile is Cys78. Residues Arg107 and Ile138–Arg139 each bind L-glutamine. Catalysis depends on charge relay system residues His175 and Glu177.

It belongs to the glutaminase PdxT/SNO family. In the presence of PdxS, forms a dodecamer of heterodimers. Only shows activity in the heterodimer.

The enzyme catalyses aldehydo-D-ribose 5-phosphate + D-glyceraldehyde 3-phosphate + L-glutamine = pyridoxal 5'-phosphate + L-glutamate + phosphate + 3 H2O + H(+). It carries out the reaction L-glutamine + H2O = L-glutamate + NH4(+). The protein operates within cofactor biosynthesis; pyridoxal 5'-phosphate biosynthesis. Its function is as follows. Catalyzes the hydrolysis of glutamine to glutamate and ammonia as part of the biosynthesis of pyridoxal 5'-phosphate. The resulting ammonia molecule is channeled to the active site of PdxS. In Corynebacterium glutamicum (strain ATCC 13032 / DSM 20300 / JCM 1318 / BCRC 11384 / CCUG 27702 / LMG 3730 / NBRC 12168 / NCIMB 10025 / NRRL B-2784 / 534), this protein is Pyridoxal 5'-phosphate synthase subunit PdxT.